A 1391-amino-acid chain; its full sequence is DNA-directed RNA polymerase subunit beta' (1391 aa).

The Zn(2+) site is built by Cys72, Cys74, Cys87, and Cys90. The Mg(2+) site is built by Asp462, Asp464, and Asp466. Residues Cys816, Cys890, Cys897, and Cys900 each coordinate Zn(2+).

The protein belongs to the RNA polymerase beta' chain family. As to quaternary structure, the RNAP catalytic core consists of 2 alpha, 1 beta, 1 beta' and 1 omega subunit. When a sigma factor is associated with the core the holoenzyme is formed, which can initiate transcription. It depends on Mg(2+) as a cofactor. The cofactor is Zn(2+).

The enzyme catalyses RNA(n) + a ribonucleoside 5'-triphosphate = RNA(n+1) + diphosphate. Functionally, DNA-dependent RNA polymerase catalyzes the transcription of DNA into RNA using the four ribonucleoside triphosphates as substrates. In Neisseria meningitidis serogroup C (strain 053442), this protein is DNA-directed RNA polymerase subunit beta'.